Reading from the N-terminus, the 331-residue chain is uncharacterized protein (331 aa).

Disordered regions lie at residues 131–163 (ISHA…KKRS) and 190–209 (DEQK…VQSS). Positions 140–162 (RPKPTKPRASRKRAAIAQSKKKR) are enriched in basic residues. Polar residues predominate over residues 195–209 (RQSTSQPDKEIVQSS).

This is an uncharacterized protein from Caenorhabditis elegans.